The primary structure comprises 103 residues: UPF0473 protein LBA0420 (103 aa).

The protein belongs to the UPF0473 family.

The protein is UPF0473 protein LBA0420 of Lactobacillus acidophilus (strain ATCC 700396 / NCK56 / N2 / NCFM).